A 218-amino-acid polypeptide reads, in one-letter code: Ornithine decarboxylase antizyme 2 (218 aa).

It belongs to the ODC antizyme family. As to quaternary structure, interacts with ODC1 and thereby sterically blocks ODC homodimerization. In terms of tissue distribution, expressed ubiquitously in 24 hours embryos, with highest levels in telencephalon, lens, retina, cerebellum and hindbrain primordia.

Ornithine decarboxylase (ODC) antizyme protein that negatively regulates ODC activity and intracellular polyamine biosynthesis and uptake in response to increased intracellular polyamine levels. Binds to ODC monomers, inhibiting the assembly of the functional ODC homodimers. Does not target the ODC monomers for degradation, which allows a protein synthesis-independent restoration of ODC activity. This Danio rerio (Zebrafish) protein is Ornithine decarboxylase antizyme 2 (oaz1b).